The chain runs to 357 residues: Probable leucine aminopeptidase TRV_02148.1 (357 aa).

The first 15 residues, 1 to 15 (MKVLAALALSALAMA), serve as a signal peptide directing secretion. Residue Asn76 is glycosylated (N-linked (GlcNAc...) asparagine). Zn(2+) is bound by residues His167 and Asp185. The interval 169-188 (DSINGKNPQGEAPGADDNGS) is disordered. Asn186 carries N-linked (GlcNAc...) asparagine glycosylation. The Zn(2+) site is built by Glu224 and Asp251. Asn269 carries an N-linked (GlcNAc...) asparagine glycan. Cys291 and Cys295 form a disulfide bridge. Zn(2+) is bound at residue His324.

Belongs to the peptidase M28 family. M28E subfamily. Monomer. Zn(2+) is required as a cofactor.

It is found in the secreted. Probable extracellular aminopeptidase which contributes to pathogenicity. This chain is Probable leucine aminopeptidase TRV_02148.1, found in Trichophyton verrucosum (strain HKI 0517).